A 352-amino-acid polypeptide reads, in one-letter code: uncharacterized protein (352 aa).

This sequence to M.pneumoniae MPN_633 (in the N-terminal section), and M.pneumoniae MPN_634 (in the C-terminal section).

This is an uncharacterized protein from Mycoplasma pneumoniae (strain ATCC 29342 / M129 / Subtype 1) (Mycoplasmoides pneumoniae).